We begin with the raw amino-acid sequence, 229 residues long: Interleukin-22 receptor subunit alpha-2 (229 aa).

The first 19 residues, 1–19 (MPKHCFLGLLIMLLTTATE), serve as a signal peptide directing secretion. Fibronectin type-III domains follow at residues 28-127 (KPQK…TKLD) and 128-229 (PPVV…VQIP). A glycan (N-linked (GlcNAc...) asparagine) is linked at Asn54. Disulfide bonds link Cys76/Cys84 and Cys204/Cys225.

It belongs to the type II cytokine receptor family.

It localises to the secreted. In terms of biological role, receptor for IL22. Binds to IL22, prevents interaction with the functional IL-22R complex and blocks the activity of IL22 (in vitro). May play an important role as an IL22 antagonist in the regulation of inflammatory responses. In Rattus norvegicus (Rat), this protein is Interleukin-22 receptor subunit alpha-2 (Il22ra2).